The chain runs to 339 residues: Ribosomal RNA small subunit methyltransferase C (339 aa).

This sequence belongs to the methyltransferase superfamily. RsmC family. Monomer.

It localises to the cytoplasm. It carries out the reaction guanosine(1207) in 16S rRNA + S-adenosyl-L-methionine = N(2)-methylguanosine(1207) in 16S rRNA + S-adenosyl-L-homocysteine + H(+). In terms of biological role, specifically methylates the guanine in position 1207 of 16S rRNA in the 30S particle. This Photobacterium profundum (strain SS9) protein is Ribosomal RNA small subunit methyltransferase C.